The primary structure comprises 368 residues: Protein trichome birefringence-like 43 (368 aa).

The helical; Signal-anchor for type II membrane protein transmembrane segment at 9–25 (GVVSVMVLMILVLLKQI) threads the bilayer. The GDS motif motif lies at 117–119 (GDS). The short motif at 344-358 (DCSHWCLSGVPDSWN) is the DCXHWCLPGXXDXWN motif element.

The protein belongs to the PC-esterase family. TBL subfamily.

It localises to the membrane. Its function is as follows. May act as a bridging protein that binds pectin and other cell wall polysaccharides. Probably involved in maintaining esterification of pectins. May be involved in the specific O-acetylation of cell wall polymers. This Arabidopsis thaliana (Mouse-ear cress) protein is Protein trichome birefringence-like 43 (TBL43).